The following is a 257-amino-acid chain: Staphylococcal secretory antigen SsaA (257 aa).

Residues 1-26 (MKKIATATIATAGIATFAFAHHDAQA) form the signal peptide. 8 repeat units span residues 73 to 75 (YNN), 76 to 78 (YNN), 84 to 86 (YNN), 87 to 89 (YSN), 90 to 92 (YNN), 93 to 95 (YSN), 96 to 98 (YNN), and 99 to 101 (YNN). An 8 X 3 AA repeats of Y-[NS]-N region spans residues 73-101 (YNNYNNYNYYGYNNYSNYNNYSNYNNYNN). Residues 101-144 (NYQSNNTQSQRTTQPTGGLGASYSTSSSNVHVTTTSAPSSNGVS) form a disordered region. The segment covering 107–116 (TQSQRTTQPT) has biased composition (polar residues). The span at 122–136 (SYSTSSSNVHVTTTS) shows a compositional bias: low complexity. A Peptidase C51 domain is found at 136–257 (SAPSSNGVSL…SQAASYNYIH (122 aa)).

The protein localises to the secreted. Its function is as follows. Not known; immunogenic protein expressed during sepsis and particularly during episodes of infective endocarditis. The protein is Staphylococcal secretory antigen SsaA (ssaA) of Staphylococcus epidermidis.